We begin with the raw amino-acid sequence, 82 residues long: MSVDLKQQLELADYLGALAVWCIFFGVLFILSVIFNFVCIKKDDDVTALERWGYKKNIDMKLGPHRRSMVARQIPQTVVADH.

In Caenorhabditis elegans, this protein is Neuropeptide-like peptide 36 (nlp-36).